The primary structure comprises 315 residues: MNYLDFESKIKEIEDKITSLSHVFEDEKTEAEIKKLSKKRLELMESTYSKLTDWQVVQLSRHPDRPYFKDLLPLIFTDFQELHGDRTFGDDLAVIGGLAKLNNKPVMVIGQEKGRDTKSKIKHNFGMMHPEGYRKALRLMKLAEKFNMPVVTFIDTPGAYPGIKAEERGQSEAIARNLLEMSALKVPVVCIVIGEGCSGGALGIGVGDRLLMLQYSYFATISPEGCASILHKTAEKASEVTQMMNITSGRLKELKIVDEVIPEPLGGAHRDYETTATNIRKAVAAELKILSEMTVEQRNSRRYDKLMSFGRFKEA.

The region spanning 36–289 is the CoA carboxyltransferase C-terminal domain; that stretch reads LSKKRLELME…RKAVAAELKI (254 aa).

Belongs to the AccA family. As to quaternary structure, acetyl-CoA carboxylase is a heterohexamer composed of biotin carboxyl carrier protein (AccB), biotin carboxylase (AccC) and two subunits each of ACCase subunit alpha (AccA) and ACCase subunit beta (AccD).

The protein resides in the cytoplasm. The catalysed reaction is N(6)-carboxybiotinyl-L-lysyl-[protein] + acetyl-CoA = N(6)-biotinyl-L-lysyl-[protein] + malonyl-CoA. It participates in lipid metabolism; malonyl-CoA biosynthesis; malonyl-CoA from acetyl-CoA: step 1/1. Component of the acetyl coenzyme A carboxylase (ACC) complex. First, biotin carboxylase catalyzes the carboxylation of biotin on its carrier protein (BCCP) and then the CO(2) group is transferred by the carboxyltransferase to acetyl-CoA to form malonyl-CoA. The chain is Acetyl-coenzyme A carboxylase carboxyl transferase subunit alpha from Francisella tularensis subsp. holarctica (strain FTNF002-00 / FTA).